The chain runs to 342 residues: UDP-3-O-(3-hydroxymyristoyl)glucosamine N-acyltransferase (342 aa).

The active-site Proton acceptor is the H239.

The protein belongs to the transferase hexapeptide repeat family. LpxD subfamily. In terms of assembly, homotrimer.

It catalyses the reaction a UDP-3-O-[(3R)-3-hydroxyacyl]-alpha-D-glucosamine + a (3R)-hydroxyacyl-[ACP] = a UDP-2-N,3-O-bis[(3R)-3-hydroxyacyl]-alpha-D-glucosamine + holo-[ACP] + H(+). The catalysed reaction is UDP-3-O-[(3R)-3-hydroxytetradecanoyl]-alpha-D-glucosamine + (3R)-hydroxytetradecanoyl-[ACP] = UDP-2-N,3-O-bis[(3R)-3-hydroxytetradecanoyl]-alpha-D-glucosamine + holo-[ACP] + H(+). The protein operates within glycolipid biosynthesis; lipid IV(A) biosynthesis; lipid IV(A) from (3R)-3-hydroxytetradecanoyl-[acyl-carrier-protein] and UDP-N-acetyl-alpha-D-glucosamine: step 3/6. Functionally, catalyzes the N-acylation of UDP-3-O-(hydroxytetradecanoyl)glucosamine using 3-hydroxytetradecanoyl-ACP as the acyl donor. Is involved in the biosynthesis of lipid A, a phosphorylated glycolipid that anchors the lipopolysaccharide to the outer membrane of the cell. The chain is UDP-3-O-(3-hydroxymyristoyl)glucosamine N-acyltransferase from Photorhabdus laumondii subsp. laumondii (strain DSM 15139 / CIP 105565 / TT01) (Photorhabdus luminescens subsp. laumondii).